We begin with the raw amino-acid sequence, 1022 residues long: Translation initiation factor IF-2 (1022 aa).

Basic and acidic residues predominate over residues 82–94 (EQSRKTLEKEQHL). 2 disordered regions span residues 82 to 129 (EQSR…AVPA) and 342 to 436 (SENK…QREL). The span at 104-115 (ASKSSAKGSESA) shows a compositional bias: low complexity. The segment covering 375-384 (KAKKGKKKKK) has biased composition (basic residues). A compositionally biased stretch (basic and acidic residues) spans 421–436 (SEREREQEEGAAQREL). One can recognise a tr-type G domain in the interval 519-689 (TRPPVVTIMG…LTEAELRELK (171 aa)). The tract at residues 528-535 (GHVDHGKT) is G1. Residue 528-535 (GHVDHGKT) participates in GTP binding. The interval 553-557 (GITQH) is G2. The interval 575 to 578 (DTPG) is G3. GTP is bound by residues 575–579 (DTPGH) and 629–632 (NKID). The tract at residues 629–632 (NKID) is G4. A G5 region spans residues 665 to 667 (SAK).

The protein belongs to the TRAFAC class translation factor GTPase superfamily. Classic translation factor GTPase family. IF-2 subfamily.

Its subcellular location is the cytoplasm. Functionally, one of the essential components for the initiation of protein synthesis. Protects formylmethionyl-tRNA from spontaneous hydrolysis and promotes its binding to the 30S ribosomal subunits. Also involved in the hydrolysis of GTP during the formation of the 70S ribosomal complex. In Chlorobium chlorochromatii (strain CaD3), this protein is Translation initiation factor IF-2.